Consider the following 313-residue polypeptide: MASEKLKAAIIGSGNIGTDLMIKIMRHSEHLEMAAMVGIDAASDGLARAARLGVATTHEGVEGLTRLPVFDDIDFVFDATSAGAHVKNDAFLRALKPGIRLIDLTPAAIGPYCVPVVNLDAHLDSRNVNMVTCGGQATIPMVAAVSRVAKVHYAEIVASISSKSAGPGTRANIDEFTETTSKAIEAVGGAAKGKAIIVLNPAEPPVMMRDTVYVLSDLADRAQVEASIEAMAAAVHAYVPGYRLKQKVQFDEIAADVPLNIPGLGRFSGLKTSVFIEVEGAAHYLPAYAGNLDIMTSAALATAERMAQSLVQA.

Residue 13-16 (SGNI) participates in NAD(+) binding. The Acyl-thioester intermediate role is filled by Cys-133. NAD(+)-binding positions include 164–172 (SAGPGTRAN) and Asn-291.

It belongs to the acetaldehyde dehydrogenase family.

It carries out the reaction acetaldehyde + NAD(+) + CoA = acetyl-CoA + NADH + H(+). The polypeptide is Acetaldehyde dehydrogenase 3 (Paraburkholderia xenovorans (strain LB400)).